The primary structure comprises 535 residues: High affinity immunoglobulin alpha and immunoglobulin mu Fc receptor (535 aa).

Residues Met1–Ser35 form the signal peptide. The Extracellular segment spans residues Met36–Arg455. A mediates immunoglobulin Fc fragment-binding region spans residues Gly95 to Trp117. Positions Gly95–Thr189 constitute an Ig-like V-type domain. Residues Cys102 and Cys173 are joined by a disulfide bond. N-linked (GlcNAc...) asparagine glycosylation occurs at Asn187. Disordered regions lie at residues Ala201–Glu360 and Glu405–Val430. 2 stretches are compositionally biased toward low complexity: residues Pro208 to Gly220 and Thr241 to Ser253. Residues Lys291–Glu328 are compositionally biased toward polar residues. Positions Asp330 to Arg346 are enriched in basic and acidic residues. A compositionally biased stretch (polar residues) spans Leu413 to Ser429. A helical transmembrane segment spans residues Ile456–Lys476. The Cytoplasmic portion of the chain corresponds to Arg477–Pro535. The tract at residues Leu507–Pro535 is disordered. Polar residues predominate over residues Asn513–Val528.

Interacts with IGHM; this interaction facilitates the endocytosis of IgM-coated microbes and IgM-antigen immune complexes. In terms of processing, N-glycosylated. As to expression, expressed in several tissues including thymus, spleen, liver, kidney, small and large intestine, testis and placenta. Expressed by oligodendrocytes, B-cells and macrophages but not granulocytes, T-cells or NK cells (at protein level).

The protein resides in the cell membrane. Functionally, functions as a receptor for the Fc fragment of IgA and IgM. Binds IgA and IgM with high affinity and mediates their endocytosis. May function in the immune response to microbes mediated by IgA and IgM. The sequence is that of High affinity immunoglobulin alpha and immunoglobulin mu Fc receptor (Fcamr) from Mus musculus (Mouse).